Reading from the N-terminus, the 327-residue chain is FERM domain-containing protein 6 (327 aa).

Residues 16–320 (RRVCIFLPND…NSHRLYMNLQ (305 aa)) enclose the FERM domain.

The protein localises to the cytoplasm. Its subcellular location is the cell membrane. This chain is FERM domain-containing protein 6 (Frmd6), found in Rattus norvegicus (Rat).